Here is a 185-residue protein sequence, read N- to C-terminus: HTH-type transcriptional repressor OpcR (185 aa).

The H-T-H motif DNA-binding region spans 49–73 (LSELSEATGMSKTRMSQVVREMIDA).

It belongs to the GbsR family.

Its activity is regulated as follows. Is not choline-responsive. Functionally, negatively regulates the transcription of the opuC operon. In the absence of GbsR, is also a negative regulator of the opuB operon. Binds to an inverted repeat in the promoter region of the operons. The chain is HTH-type transcriptional repressor OpcR (opcR) from Bacillus subtilis (strain 168).